Reading from the N-terminus, the 404-residue chain is DNA gyrase subunit B (404 aa).

In terms of domain architecture, Toprim spans 321–404 (SEIYIVEGDS…VIIMTDADVD (84 aa)). Mg(2+) is bound by residues E327, D400, and D402.

The protein belongs to the type II topoisomerase GyrB family. In terms of assembly, heterotetramer, composed of two GyrA and two GyrB chains. In the heterotetramer, GyrA contains the active site tyrosine that forms a transient covalent intermediate with DNA, while GyrB binds cofactors and catalyzes ATP hydrolysis. Mg(2+) is required as a cofactor. Mn(2+) serves as cofactor. The cofactor is Ca(2+).

It localises to the cytoplasm. It carries out the reaction ATP-dependent breakage, passage and rejoining of double-stranded DNA.. Its function is as follows. A type II topoisomerase that negatively supercoils closed circular double-stranded (ds) DNA in an ATP-dependent manner to modulate DNA topology and maintain chromosomes in an underwound state. Negative supercoiling favors strand separation, and DNA replication, transcription, recombination and repair, all of which involve strand separation. Also able to catalyze the interconversion of other topological isomers of dsDNA rings, including catenanes and knotted rings. Type II topoisomerases break and join 2 DNA strands simultaneously in an ATP-dependent manner. In Bacillus cereus, this protein is DNA gyrase subunit B (gyrB).